We begin with the raw amino-acid sequence, 45 residues long: MPMATTIDGTDYTNIMPITVFTTVYLGVFIGIDTSTTGFTCFSRY.

It belongs to the coronaviruses ns4/ns4.8 protein family.

The protein is Non-structural protein of 4.8 kDa of Bovine coronavirus (strain OK-0514) (BCoV).